A 187-amino-acid chain; its full sequence is Probable chorismate pyruvate-lyase (187 aa).

3 residues coordinate substrate: arginine 81, leucine 119, and glutamate 178.

It belongs to the UbiC family.

Its subcellular location is the cytoplasm. The enzyme catalyses chorismate = 4-hydroxybenzoate + pyruvate. It functions in the pathway cofactor biosynthesis; ubiquinone biosynthesis. Its function is as follows. Removes the pyruvyl group from chorismate, with concomitant aromatization of the ring, to provide 4-hydroxybenzoate (4HB) for the ubiquinone pathway. The chain is Probable chorismate pyruvate-lyase from Thiobacillus denitrificans (strain ATCC 25259 / T1).